A 470-amino-acid polypeptide reads, in one-letter code: 3-isopropylmalate dehydratase large subunit (470 aa).

Residues C349, C409, and C412 each coordinate [4Fe-4S] cluster.

The protein belongs to the aconitase/IPM isomerase family. LeuC type 1 subfamily. In terms of assembly, heterodimer of LeuC and LeuD. [4Fe-4S] cluster is required as a cofactor.

The catalysed reaction is (2R,3S)-3-isopropylmalate = (2S)-2-isopropylmalate. Its pathway is amino-acid biosynthesis; L-leucine biosynthesis; L-leucine from 3-methyl-2-oxobutanoate: step 2/4. Catalyzes the isomerization between 2-isopropylmalate and 3-isopropylmalate, via the formation of 2-isopropylmaleate. This Campylobacter jejuni subsp. jejuni serotype O:2 (strain ATCC 700819 / NCTC 11168) protein is 3-isopropylmalate dehydratase large subunit.